The primary structure comprises 640 residues: Threonine--tRNA ligase (640 aa).

Residues M1–T61 enclose the TGS domain. Residues D242–P533 form a catalytic region. 3 residues coordinate Zn(2+): C333, H384, and H510.

Belongs to the class-II aminoacyl-tRNA synthetase family. As to quaternary structure, homodimer. Zn(2+) is required as a cofactor.

It localises to the cytoplasm. The enzyme catalyses tRNA(Thr) + L-threonine + ATP = L-threonyl-tRNA(Thr) + AMP + diphosphate + H(+). Functionally, catalyzes the attachment of threonine to tRNA(Thr) in a two-step reaction: L-threonine is first activated by ATP to form Thr-AMP and then transferred to the acceptor end of tRNA(Thr). Also edits incorrectly charged L-seryl-tRNA(Thr). The polypeptide is Threonine--tRNA ligase (Acinetobacter baumannii (strain AB0057)).